The sequence spans 904 residues: Translation initiation factor IF-2 (904 aa).

Disordered stretches follow at residues 103–122 (YVKSENEGSGRAAPMTPDEE), 137–252 (NLEE…MVAG), and 267–315 (HLSA…FERP). The span at 137 to 177 (NLEEQQRLAESDRVRDEAIQRKREEEQAAKDRAEAERKAAE) shows a compositional bias: basic and acidic residues. 2 stretches are compositionally biased toward low complexity: residues 178-230 (EAAA…AAPA) and 280-293 (RGKPTGRPGSSSSR). One can recognise a tr-type G domain in the interval 403 to 572 (SRPPVVTIMG…SLQAEVLELK (170 aa)). The interval 412–419 (GHVDHGKT) is G1. A GTP-binding site is contributed by 412-419 (GHVDHGKT). Residues 437–441 (GITQH) form a G2 region. The segment at 458 to 461 (DTPG) is G3. GTP contacts are provided by residues 458 to 462 (DTPGH) and 512 to 515 (NKID). Residues 512–515 (NKID) are G4. Residues 548-550 (SAK) are G5.

The protein belongs to the TRAFAC class translation factor GTPase superfamily. Classic translation factor GTPase family. IF-2 subfamily.

It is found in the cytoplasm. One of the essential components for the initiation of protein synthesis. Protects formylmethionyl-tRNA from spontaneous hydrolysis and promotes its binding to the 30S ribosomal subunits. Also involved in the hydrolysis of GTP during the formation of the 70S ribosomal complex. This chain is Translation initiation factor IF-2, found in Xanthomonas euvesicatoria pv. vesicatoria (strain 85-10) (Xanthomonas campestris pv. vesicatoria).